The primary structure comprises 99 residues: NADH-quinone oxidoreductase subunit K (99 aa).

A run of 3 helical transmembrane segments spans residues 3–23 (VTAY…GVLI), 28–48 (IVVF…LVAF), and 59–79 (IAAF…LAII).

This sequence belongs to the complex I subunit 4L family. NDH-1 is composed of 14 different subunits. Subunits NuoA, H, J, K, L, M, N constitute the membrane sector of the complex.

It localises to the cell membrane. The enzyme catalyses a quinone + NADH + 5 H(+)(in) = a quinol + NAD(+) + 4 H(+)(out). Its function is as follows. NDH-1 shuttles electrons from NADH, via FMN and iron-sulfur (Fe-S) centers, to quinones in the respiratory chain. The immediate electron acceptor for the enzyme in this species is believed to be a menaquinone. Couples the redox reaction to proton translocation (for every two electrons transferred, four hydrogen ions are translocated across the cytoplasmic membrane), and thus conserves the redox energy in a proton gradient. The sequence is that of NADH-quinone oxidoreductase subunit K from Nocardioides sp. (strain ATCC BAA-499 / JS614).